The following is a 988-amino-acid chain: Protein argonaute 10 (988 aa).

Over residues M1–E11 the composition is skewed to basic and acidic residues. The tract at residues M1–V103 is disordered. Low complexity predominate over residues P41 to S57. The span at N64–G73 shows a compositional bias: basic residues. Residues P338 to E451 form the PAZ domain. Residues L625–E946 enclose the Piwi domain.

The protein belongs to the argonaute family. Ago subfamily. As to quaternary structure, interacts with GATA18/HAN and KNAT1/BP. Interacts with RICE1 and RICE2 that act as cofactors. As to expression, expressed in roots, stems, leaves, developing embryo, siliques, inflorescences, provascular tissue, shoot apical meristem (SAM) and adaxial (upper) sides of lateral organ primordia. Observed in the floral meristem, the adaxial side of sepal primordia, and the provascular tissue.

The protein localises to the cytoplasm. Its function is as follows. Involved in RNA-mediated post-transcriptional gene silencing (PTGS). Main component of the RNA-induced silencing complex (RISC) that binds to a short guide RNA such as a microRNA (miRNA) or small interfering RNA (siRNA). RISC uses the mature miRNA or siRNA as a guide for slicer-directed cleavage of homologous mRNAs to repress gene expression. Required for reliable formation of primary and axillary shoot apical meristems. Specifies leaf adaxial identity by repressing the miR165 and miR166 microRNAs in the embryonic shoot apex, in the shoot apical meristem (SAM) and leaf. Represses the microRNA miR398 which targets CCS1 chaperone mRNAs for translational inhibition. Acts as a negative regulator of AGO1 protein level. Like AGO1, is required for stem cell function and organ polarity. Unlike AGO1, is not subjected to small RNA-mediated repression itself. Essential for multiple processes in development. Coregulates, with GATA18/HAN, the shoot apical meristem (SAM) organization. This Arabidopsis thaliana (Mouse-ear cress) protein is Protein argonaute 10.